A 741-amino-acid polypeptide reads, in one-letter code: Catalase-peroxidase 2 (741 aa).

The signal sequence occupies residues 1–28 (MQRNRIAKSVLAALAVIAMSAGSISARA). A cross-link (tryptophyl-tyrosyl-methioninium (Trp-Tyr) (with M-254)) is located at residues 107–228 (WHGAGTYRTY…LAATQMGLIY (122 aa)). His108 (proton acceptor) is an active-site residue. The tryptophyl-tyrosyl-methioninium (Tyr-Met) (with W-107) cross-link spans 228-254 (YVNPEGPNGNPDPVAAAQDIREAFGRM). His269 lines the heme b pocket.

The protein belongs to the peroxidase family. Peroxidase/catalase subfamily. As to quaternary structure, homodimer or homotetramer. Heme b serves as cofactor. In terms of processing, formation of the three residue Trp-Tyr-Met cross-link is important for the catalase, but not the peroxidase activity of the enzyme.

The enzyme catalyses H2O2 + AH2 = A + 2 H2O. It catalyses the reaction 2 H2O2 = O2 + 2 H2O. In terms of biological role, bifunctional enzyme with both catalase and broad-spectrum peroxidase activity. The sequence is that of Catalase-peroxidase 2 from Burkholderia vietnamiensis (strain G4 / LMG 22486) (Burkholderia cepacia (strain R1808)).